The following is a 152-amino-acid chain: Deoxyuridine 5'-triphosphate nucleotidohydrolase (152 aa).

Substrate-binding positions include 71 to 73 (RSG), Asn84, 88 to 90 (LID), and Met98.

This sequence belongs to the dUTPase family. It depends on Mg(2+) as a cofactor.

It carries out the reaction dUTP + H2O = dUMP + diphosphate + H(+). It functions in the pathway pyrimidine metabolism; dUMP biosynthesis; dUMP from dCTP (dUTP route): step 2/2. In terms of biological role, this enzyme is involved in nucleotide metabolism: it produces dUMP, the immediate precursor of thymidine nucleotides and it decreases the intracellular concentration of dUTP so that uracil cannot be incorporated into DNA. The protein is Deoxyuridine 5'-triphosphate nucleotidohydrolase of Salmonella arizonae (strain ATCC BAA-731 / CDC346-86 / RSK2980).